A 223-amino-acid polypeptide reads, in one-letter code: Deoxyribose-phosphate aldolase (223 aa).

Residue D91 is the Proton donor/acceptor of the active site. Residue K153 is the Schiff-base intermediate with acetaldehyde of the active site. K182 acts as the Proton donor/acceptor in catalysis.

Belongs to the DeoC/FbaB aldolase family. DeoC type 1 subfamily.

Its subcellular location is the cytoplasm. The enzyme catalyses 2-deoxy-D-ribose 5-phosphate = D-glyceraldehyde 3-phosphate + acetaldehyde. It functions in the pathway carbohydrate degradation; 2-deoxy-D-ribose 1-phosphate degradation; D-glyceraldehyde 3-phosphate and acetaldehyde from 2-deoxy-alpha-D-ribose 1-phosphate: step 2/2. Its function is as follows. Catalyzes a reversible aldol reaction between acetaldehyde and D-glyceraldehyde 3-phosphate to generate 2-deoxy-D-ribose 5-phosphate. This Streptococcus pyogenes serotype M12 (strain MGAS2096) protein is Deoxyribose-phosphate aldolase.